The chain runs to 194 residues: Xanthine phosphoribosyltransferase (194 aa).

Residues Leu-20 and Asn-27 each coordinate xanthine. A 5-phospho-alpha-D-ribose 1-diphosphate-binding site is contributed by 128-132 (ANGCA). Lys-156 serves as a coordination point for xanthine.

This sequence belongs to the purine/pyrimidine phosphoribosyltransferase family. Xpt subfamily. As to quaternary structure, homodimer.

Its subcellular location is the cytoplasm. The catalysed reaction is XMP + diphosphate = xanthine + 5-phospho-alpha-D-ribose 1-diphosphate. The protein operates within purine metabolism; XMP biosynthesis via salvage pathway; XMP from xanthine: step 1/1. In terms of biological role, converts the preformed base xanthine, a product of nucleic acid breakdown, to xanthosine 5'-monophosphate (XMP), so it can be reused for RNA or DNA synthesis. The chain is Xanthine phosphoribosyltransferase from Lachnoclostridium phytofermentans (strain ATCC 700394 / DSM 18823 / ISDg) (Clostridium phytofermentans).